Consider the following 305-residue polypeptide: RxLR effector protein 17 (305 aa).

Residues 1–24 form the signal peptide; the sequence is MQSILWFALIASVVFLVLVDLASG. The RxLR-dEER signature appears at 45 to 60; sequence RLLRAAHLDRKLSEER. Asn207 and Asn227 each carry an N-linked (GlcNAc...) asparagine glycan. The tract at residues 247 to 269 is w motif; the sequence is LHLKWAVEAKSPKDVVERILKDL.

This sequence belongs to the RxLR effector family. As to quaternary structure, interacts with host A.thaliana At1G14340.

The protein resides in the secreted. It localises to the host cell membrane. Functionally, secreted effector that confers enhanced plant susceptibility during both compatible and incompatible interactions between the pathogen and its host. Promotes the sexual reproduction of the pathogen in the plant host. This chain is RxLR effector protein 17, found in Hyaloperonospora arabidopsidis (strain Emoy2) (Downy mildew agent).